The following is a 490-amino-acid chain: Hexokinase (490 aa).

Residues 21–466 form the Hexokinase domain; sequence QNLLEHIKHF…SGVGAALIAA (446 aa). Positions 75–209 are hexokinase small subdomain; the sequence is DGKETGTFLA…GLPIKVAALI (135 aa). Residues 210-455 form a hexokinase large subdomain region; that stretch reads NDTTGTLIAS…DKVTIHAAED (246 aa).

This sequence belongs to the hexokinase family. In terms of assembly, monomer.

It carries out the reaction a D-hexose + ATP = a D-hexose 6-phosphate + ADP + H(+). It catalyses the reaction D-fructose + ATP = D-fructose 6-phosphate + ADP + H(+). The enzyme catalyses D-glucose + ATP = D-glucose 6-phosphate + ADP + H(+). The protein operates within carbohydrate metabolism; hexose metabolism. Its pathway is carbohydrate degradation; glycolysis; D-glyceraldehyde 3-phosphate and glycerone phosphate from D-glucose: step 1/4. Its function is as follows. Catalyzes the phosphorylation of hexose, such as D-glucose and D-fructose, to hexose 6-phosphate (D-glucose 6-phosphate and D-fructose 6-phosphate, respectively). Mediates the initial step of glycolysis by catalyzing phosphorylation of D-glucose to D-glucose 6-phosphate. In Emericella nidulans (strain FGSC A4 / ATCC 38163 / CBS 112.46 / NRRL 194 / M139) (Aspergillus nidulans), this protein is Hexokinase (hxkA).